The following is a 379-amino-acid chain: Queuine tRNA-ribosyltransferase (379 aa).

D94 acts as the Proton acceptor in catalysis. Substrate is bound by residues D94–F98, D148, Q191, and G218. The segment at G249–S255 is RNA binding. Residue D268 is the Nucleophile of the active site. The interval T273–R277 is RNA binding; important for wobble base 34 recognition. Zn(2+)-binding residues include C306, C308, C311, and H337.

This sequence belongs to the queuine tRNA-ribosyltransferase family. Homodimer. Within each dimer, one monomer is responsible for RNA recognition and catalysis, while the other monomer binds to the replacement base PreQ1. It depends on Zn(2+) as a cofactor.

It catalyses the reaction 7-aminomethyl-7-carbaguanine + guanosine(34) in tRNA = 7-aminomethyl-7-carbaguanosine(34) in tRNA + guanine. It functions in the pathway tRNA modification; tRNA-queuosine biosynthesis. Its function is as follows. Catalyzes the base-exchange of a guanine (G) residue with the queuine precursor 7-aminomethyl-7-deazaguanine (PreQ1) at position 34 (anticodon wobble position) in tRNAs with GU(N) anticodons (tRNA-Asp, -Asn, -His and -Tyr). Catalysis occurs through a double-displacement mechanism. The nucleophile active site attacks the C1' of nucleotide 34 to detach the guanine base from the RNA, forming a covalent enzyme-RNA intermediate. The proton acceptor active site deprotonates the incoming PreQ1, allowing a nucleophilic attack on the C1' of the ribose to form the product. After dissociation, two additional enzymatic reactions on the tRNA convert PreQ1 to queuine (Q), resulting in the hypermodified nucleoside queuosine (7-(((4,5-cis-dihydroxy-2-cyclopenten-1-yl)amino)methyl)-7-deazaguanosine). The chain is Queuine tRNA-ribosyltransferase from Bacillus cytotoxicus (strain DSM 22905 / CIP 110041 / 391-98 / NVH 391-98).